The following is a 263-amino-acid chain: Putative TATA-binding protein pB263R (263 aa).

It belongs to the asfivirus B263R family.

Putative TATA-binding protein. This African swine fever virus (isolate Tick/Malawi/Lil 20-1/1983) (ASFV) protein is Putative TATA-binding protein pB263R.